The chain runs to 225 residues: uncharacterized protein (225 aa).

This is an uncharacterized protein from Mycoplasma genitalium (strain ATCC 33530 / DSM 19775 / NCTC 10195 / G37) (Mycoplasmoides genitalium).